Here is a 336-residue protein sequence, read N- to C-terminus: S-adenosylmethionine:tRNA ribosyltransferase-isomerase (336 aa).

The protein belongs to the QueA family. In terms of assembly, monomer.

Its subcellular location is the cytoplasm. It carries out the reaction 7-aminomethyl-7-carbaguanosine(34) in tRNA + S-adenosyl-L-methionine = epoxyqueuosine(34) in tRNA + adenine + L-methionine + 2 H(+). It participates in tRNA modification; tRNA-queuosine biosynthesis. Transfers and isomerizes the ribose moiety from AdoMet to the 7-aminomethyl group of 7-deazaguanine (preQ1-tRNA) to give epoxyqueuosine (oQ-tRNA). The chain is S-adenosylmethionine:tRNA ribosyltransferase-isomerase from Sulfurihydrogenibium sp. (strain YO3AOP1).